Consider the following 61-residue polypeptide: Probable tautomerase BH3814 (61 aa).

P2 acts as the Proton acceptor; via imino nitrogen in catalysis.

The protein belongs to the 4-oxalocrotonate tautomerase family.

This is Probable tautomerase BH3814 from Halalkalibacterium halodurans (strain ATCC BAA-125 / DSM 18197 / FERM 7344 / JCM 9153 / C-125) (Bacillus halodurans).